Consider the following 58-residue polypeptide: Large ribosomal subunit protein bL32 (58 aa).

Residues 1–19 are compositionally biased toward basic residues; the sequence is MAVPKKRTSKSKKNMRKAN. The interval 1 to 58 is disordered; it reads MAVPKKRTSKSKKNMRKANWKNQAKLAAKKALSLGKSVETQRSHSFVHPRYEEEEEED. Residues 20 to 32 show a composition bias toward low complexity; that stretch reads WKNQAKLAAKKAL.

It belongs to the bacterial ribosomal protein bL32 family.

In Trichodesmium erythraeum (strain IMS101), this protein is Large ribosomal subunit protein bL32.